Consider the following 355-residue polypeptide: 3-isopropylmalate dehydrogenase (355 aa).

Positions 90, 100, 128, and 222 each coordinate substrate. The Mg(2+) site is built by aspartate 222, aspartate 246, and aspartate 250. Residue 280 to 292 (GSAPDIAGKGIAN) participates in NAD(+) binding.

Belongs to the isocitrate and isopropylmalate dehydrogenases family. LeuB type 1 subfamily. In terms of assembly, homodimer. It depends on Mg(2+) as a cofactor. Requires Mn(2+) as cofactor.

It is found in the cytoplasm. The catalysed reaction is (2R,3S)-3-isopropylmalate + NAD(+) = 4-methyl-2-oxopentanoate + CO2 + NADH. The protein operates within amino-acid biosynthesis; L-leucine biosynthesis; L-leucine from 3-methyl-2-oxobutanoate: step 3/4. Its function is as follows. Catalyzes the oxidation of 3-carboxy-2-hydroxy-4-methylpentanoate (3-isopropylmalate) to 3-carboxy-4-methyl-2-oxopentanoate. The product decarboxylates to 4-methyl-2 oxopentanoate. This chain is 3-isopropylmalate dehydrogenase, found in Burkholderia multivorans (strain ATCC 17616 / 249).